The following is a 134-amino-acid chain: D-ribose pyranase (134 aa).

The active-site Proton donor is H20. Substrate contacts are provided by residues D28, H99, and 123–125 (YSN).

The protein belongs to the RbsD / FucU family. RbsD subfamily. In terms of assembly, homodecamer.

It is found in the cytoplasm. It catalyses the reaction beta-D-ribopyranose = beta-D-ribofuranose. It participates in carbohydrate metabolism; D-ribose degradation; D-ribose 5-phosphate from beta-D-ribopyranose: step 1/2. Functionally, catalyzes the interconversion of beta-pyran and beta-furan forms of D-ribose. This Staphylococcus aureus (strain Mu3 / ATCC 700698) protein is D-ribose pyranase.